The following is a 230-amino-acid chain: Urease accessory protein UreE (230 aa).

The segment covering 200–210 (HAIHSHGTGHT) has biased composition (basic residues). Residues 200-230 (HAIHSHGTGHTHSHDHDHSHSHGDHDHDHKH) are disordered. The segment covering 211-230 (HSHDHDHSHSHGDHDHDHKH) has biased composition (basic and acidic residues).

Belongs to the UreE family.

Its subcellular location is the cytoplasm. Involved in urease metallocenter assembly. Binds nickel. Probably functions as a nickel donor during metallocenter assembly. This is Urease accessory protein UreE from Yersinia enterocolitica serotype O:8 / biotype 1B (strain NCTC 13174 / 8081).